Here is a 469-residue protein sequence, read N- to C-terminus: UDP-glycosyltransferase 75B1 (469 aa).

Residue His-16 is the Proton acceptor of the active site. Residue His-16 participates in an anthocyanidin binding. Gln-334, His-349, Trp-352, Ser-354, Glu-357, Asp-373, and Gln-374 together coordinate UDP-alpha-D-glucose.

Belongs to the UDP-glycosyltransferase family. Interacts with CALS1, ROP1 and phragmoplastin.

The protein localises to the cytoplasm. It localises to the perinuclear region. It is found in the cytoskeleton. The protein resides in the phragmoplast. The enzyme catalyses (indol-3-yl)acetate + UDP-alpha-D-glucose = 1-O-(indol-3-ylacetyl)-beta-D-glucose + UDP. The protein operates within plant hormone metabolism; auxin conjugation. Functionally, possesses low catalytic activity on indole-3-acetic acid (IAA) in vitro. May transfer UDP-glucose from sucrose synthase to callose synthase for the synthesis of callose at the forming cell plate during cytokinesis. Has high affinity for 4-aminobenzoate. Catalyzes the formation of 4-aminobenzoate glucose ester which represents a storage form of 4-aminobenzoate in the vacuole. Is the major source of this activity in the plant. Also active in vitro on benzoates and benzoate derivatives. This Arabidopsis thaliana (Mouse-ear cress) protein is UDP-glycosyltransferase 75B1 (UGT75B1).